Reading from the N-terminus, the 970-residue chain is uncharacterized protein (970 aa).

The interval glutamine 942–histidine 970 is disordered. Positions serine 953–histidine 970 are enriched in basic and acidic residues.

This is an uncharacterized protein from Frog virus 3 (isolate Goorha) (FV-3).